The following is a 101-amino-acid chain: Protein S100-A3 (101 aa).

2 consecutive EF-hand domains span residues 12-47 (IVCT…TWTP) and 50-85 (FREC…LCLY). Residue Lys-26 coordinates Ca(2+). Cys-30 and Cys-68 are joined by a disulfide. A Citrulline; by PAD3 modification is found at Arg-51. 5 residues coordinate Ca(2+): Asp-63, Asn-65, Asp-67, Glu-69, and Glu-74. The Zn(2+) site is built by Cys-83, Cys-86, His-87, and Cys-93.

The protein belongs to the S-100 family. In terms of assembly, homodimer and homotetramer for the citrullinated form. More than half of the arginine residues undergo citrullination by PAD1 and PAD2. Arg-51 is specifically citrullinated by PAD3 and promotes tetramerization. Skin specific, specifically expressed in cuticle of pelage follicle.

It localises to the cytoplasm. Binds both calcium and zinc. May be involved in calcium-dependent cuticle cell differentiation, hair shaft and hair cuticular barrier formation. The polypeptide is Protein S100-A3 (S100a3) (Mus musculus (Mouse)).